The following is a 312-amino-acid chain: Homoserine O-succinyltransferase (312 aa).

Cysteine 142 serves as the catalytic Acyl-thioester intermediate. Substrate-binding residues include lysine 163 and serine 192. The active-site Proton acceptor is histidine 235. Glutamate 237 is a catalytic residue. Arginine 249 contributes to the substrate binding site.

Belongs to the MetA family.

The protein localises to the cytoplasm. The enzyme catalyses L-homoserine + succinyl-CoA = O-succinyl-L-homoserine + CoA. It functions in the pathway amino-acid biosynthesis; L-methionine biosynthesis via de novo pathway; O-succinyl-L-homoserine from L-homoserine: step 1/1. Functionally, transfers a succinyl group from succinyl-CoA to L-homoserine, forming succinyl-L-homoserine. The chain is Homoserine O-succinyltransferase from Alteromonas mediterranea (strain DSM 17117 / CIP 110805 / LMG 28347 / Deep ecotype).